We begin with the raw amino-acid sequence, 122 residues long: Large ribosomal subunit protein uL14c (122 aa).

Belongs to the universal ribosomal protein uL14 family. Part of the 50S ribosomal subunit.

It is found in the plastid. It localises to the chloroplast. Binds to 23S rRNA. This Illicium oligandrum (Star anise) protein is Large ribosomal subunit protein uL14c.